Reading from the N-terminus, the 356-residue chain is Protein MGF 360-10L (356 aa).

The ANK repeat unit spans residues 57–89; it reads DLNTALMLATKENNYQLIKMFTDWGADINYGLI. N172 carries N-linked (GlcNAc...) asparagine; by host glycosylation. A helical membrane pass occupies residues 249 to 271; the sequence is NFLTIYYCFILGANINLAMIASI. 2 N-linked (GlcNAc...) asparagine; by host glycosylation sites follow: N352 and N353.

Belongs to the asfivirus MGF 360 family.

The protein localises to the host membrane. Functionally, plays a role in virus cell tropism, and may be required for efficient virus replication in macrophages. The chain is Protein MGF 360-10L from African swine fever virus (isolate Tick/South Africa/Pretoriuskop Pr4/1996) (ASFV).